A 227-amino-acid polypeptide reads, in one-letter code: Large ribosomal subunit protein uL3 (227 aa).

Gln-151 is modified (N5-methylglutamine).

This sequence belongs to the universal ribosomal protein uL3 family. Part of the 50S ribosomal subunit. Forms a cluster with proteins L14 and L19. Post-translationally, methylated by PrmB.

Its function is as follows. One of the primary rRNA binding proteins, it binds directly near the 3'-end of the 23S rRNA, where it nucleates assembly of the 50S subunit. The polypeptide is Large ribosomal subunit protein uL3 (Gluconobacter oxydans (strain 621H) (Gluconobacter suboxydans)).